A 472-amino-acid polypeptide reads, in one-letter code: MSTKDKLNLPPKRTINTRLSTPVHIPPPINSESTRITPQHGSPPRFGDHRISAAQGLFQRRRNARKIDHPLGWFLKNRHAAAHIPQRTTKTSQKLVLLPENHAVNSFNEEESNYEDLLTPSDAYNLIKLENLPRDKREELGFPRATAYCVCEAFQLPKVKHFLKHYHKVRAKKYDEVLYAVYHLPLVYGRSESCRVSSGPAPDDMPSSASNHNQKHLDSDKPDNENFDSHIISQLYRISEIFVFSYGVVVFWNFSLSQEKDILADLTFGGDNSLMVKPLAEEECEIEDLHFHYAPNTKRPRIYNDMIHIPSADNKMKLAMSHALAQSVKLSRFELRTDVTMNSALFYPKKLALYGHLGLSRVEVVRMSGHLFQLRVDVNLISNILDTPDFLWDSEPLLLPLYTAFREYLEIGPRTNVLNRRCKVIFDMLDIFGKSSADRKMNSITWIIIILISLFVIIFTLEVILRLRWAHR.

Disordered stretches follow at residues 1–47 (MSTK…PRFG) and 197–223 (SSGP…DKPD). Over 1–443 (MSTKDKLNLP…KSSADRKMNS (443 aa)) the chain is Lumenal. Positions 30 to 40 (NSESTRITPQH) are enriched in polar residues. S42 is subject to Phosphoserine. A helical membrane pass occupies residues 444–464 (ITWIIIILISLFVIIFTLEVI). The Cytoplasmic portion of the chain corresponds to 465-472 (LRLRWAHR).

This sequence belongs to the RMD1/sif2 family. In terms of assembly, interacts with sad1.

The protein resides in the nucleus membrane. The chain is Sad1-interacting factor 3 (sif3) from Schizosaccharomyces pombe (strain 972 / ATCC 24843) (Fission yeast).